The sequence spans 446 residues: Tubulin beta chain (446 aa).

GTP-binding residues include Gln11, Glu69, Ser138, Gly142, Thr143, Gly144, Asn204, and Asn226. Glu69 is a Mg(2+) binding site. The disordered stretch occupies residues Tyr422–Glu446. Over residues Gly429–Glu446 the composition is skewed to acidic residues.

This sequence belongs to the tubulin family. As to quaternary structure, dimer of alpha and beta chains. A typical microtubule is a hollow water-filled tube with an outer diameter of 25 nm and an inner diameter of 15 nM. Alpha-beta heterodimers associate head-to-tail to form protofilaments running lengthwise along the microtubule wall with the beta-tubulin subunit facing the microtubule plus end conferring a structural polarity. Microtubules usually have 13 protofilaments but different protofilament numbers can be found in some organisms and specialized cells. Mg(2+) is required as a cofactor.

Its subcellular location is the cytoplasm. It localises to the cytoskeleton. Its function is as follows. Tubulin is the major constituent of microtubules, a cylinder consisting of laterally associated linear protofilaments composed of alpha- and beta-tubulin heterodimers. Microtubules grow by the addition of GTP-tubulin dimers to the microtubule end, where a stabilizing cap forms. Below the cap, tubulin dimers are in GDP-bound state, owing to GTPase activity of alpha-tubulin. This chain is Tubulin beta chain (TUB2), found in Gibberella zeae (strain ATCC MYA-4620 / CBS 123657 / FGSC 9075 / NRRL 31084 / PH-1) (Wheat head blight fungus).